A 130-amino-acid chain; its full sequence is Small ribosomal subunit protein uS8 (130 aa).

This sequence belongs to the universal ribosomal protein uS8 family. Part of the 30S ribosomal subunit. Contacts proteins S5 and S12.

Functionally, one of the primary rRNA binding proteins, it binds directly to 16S rRNA central domain where it helps coordinate assembly of the platform of the 30S subunit. The polypeptide is Small ribosomal subunit protein uS8 (Pseudomonas entomophila (strain L48)).